A 238-amino-acid chain; its full sequence is Ribitol-5-phosphate cytidylyltransferase 2 (238 aa).

Residues 7–10 (LAGG) and 81–87 (GTDRNET) each bind CTP.

Belongs to the IspD/TarI cytidylyltransferase family. TarI subfamily.

The catalysed reaction is D-ribitol 5-phosphate + CTP + H(+) = CDP-L-ribitol + diphosphate. It functions in the pathway cell wall biogenesis; poly(ribitol phosphate) teichoic acid biosynthesis. Its function is as follows. Catalyzes the transfer of the cytidylyl group of CTP to D-ribitol 5-phosphate. The protein is Ribitol-5-phosphate cytidylyltransferase 2 of Staphylococcus aureus (strain MSSA476).